The following is a 355-amino-acid chain: Ataxin-3 (355 aa).

Met-1 participates in a covalent cross-link: Peptide (Met-Gly) (interchain with G-Cter in ubiquitin). The Josephin domain maps to 1 to 180 (MESIFHEKQE…DCEADQLLQM (180 aa)). Cys-14 acts as the Nucleophile in catalysis. The active-site Proton acceptor is His-119. Asn-134 is an active-site residue. Lys-200 is covalently cross-linked (Glycyl lysine isopeptide (Lys-Gly) (interchain with G-Cter in ubiquitin)). Ser-219 carries the phosphoserine modification. 2 UIM domains span residues 224 to 243 (EDED…IDME) and 244 to 263 (DEEA…SSRS). Over residues 257–275 (MQGSSRSMCENSPQTSSPD) the composition is skewed to polar residues. The interval 257 to 355 (MQGSSRSMCE…KDNLKAERKK (99 aa)) is disordered. Ser-268, Ser-272, and Ser-273 each carry phosphoserine. Over residues 279–289 (EELRRRREAYF) the composition is skewed to basic and acidic residues. At Ser-321 the chain carries Phosphoserine. In terms of domain architecture, UIM 3 spans 329–348 (SEEDMLRAAVTMSLETAKDN). Residues 344–355 (TAKDNLKAERKK) show a composition bias toward basic and acidic residues.

Interacts with STUB1/CHIP (when monoubiquitinated). Interacts with DNA repair proteins RAD23A and RAD23B. Interacts with BECN1 (via its poly-Gln domain). Interacts with PRKN, UBR2, VCP and tubulin. Monoubiquitinated by UBE2W, possibly leading to activate the deubiquitinating enzyme activity.

The protein localises to the nucleus matrix. It is found in the nucleus. Its subcellular location is the lysosome membrane. The catalysed reaction is Thiol-dependent hydrolysis of ester, thioester, amide, peptide and isopeptide bonds formed by the C-terminal Gly of ubiquitin (a 76-residue protein attached to proteins as an intracellular targeting signal).. Its function is as follows. Deubiquitinating enzyme involved in protein homeostasis maintenance, transcription, cytoskeleton regulation, myogenesis and degradation of misfolded chaperone substrates. Binds long polyubiquitin chains and trims them, while it has weak or no activity against chains of 4 or less ubiquitins. Involved in degradation of misfolded chaperone substrates via its interaction with STUB1/CHIP: recruited to monoubiquitinated STUB1/CHIP, and restricts the length of ubiquitin chain attached to STUB1/CHIP substrates and preventing further chain extension. Interacts with key regulators of transcription and represses transcription: acts as a histone-binding protein that regulates transcription. Acts as a negative regulator of mTORC1 signaling in response to amino acid deprivation by mediating deubiquitination of RHEB, thereby promoting RHEB inactivation by the TSC-TBC complex. Regulates autophagy via the deubiquitination of 'Lys-402' of BECN1 leading to the stabilization of BECN1. This chain is Ataxin-3 (Atxn3), found in Mus musculus (Mouse).